We begin with the raw amino-acid sequence, 109 residues long: U16-hexatoxin-Hi1a (109 aa).

Positions 1–16 (LTGHLCCMMIWWQATQ) are cleaved as a signal peptide. A propeptide spanning residues 17–43 (VISPPLPVIREENNSHKMGVSLFPLKR) is cleaved from the precursor.

Contains 2 disulfide bonds. Expressed by the venom gland.

The protein localises to the secreted. Its function is as follows. Probable ion channel inhibitor. The polypeptide is U16-hexatoxin-Hi1a (Hadronyche infensa (Fraser island funnel-web spider)).